The following is a 382-amino-acid chain: (R,R)-butanediol dehydrogenase (382 aa).

C39 is a Zn(2+) binding site. Residue S63 is modified to Phosphoserine. 6 residues coordinate Zn(2+): H73, C103, C120, C123, C131, and E173.

It belongs to the zinc-containing alcohol dehydrogenase family. Homodimer. Requires Zn(2+) as cofactor.

Its subcellular location is the cytoplasm. It catalyses the reaction (R,R)-butane-2,3-diol + NAD(+) = (R)-acetoin + NADH + H(+). NAD-dependent (R,R)-butanediol dehydrogenase which catalyzes oxidation of (R,R)-butane-2,3-diol to (3R)-acetoin, of meso-butanediol to (3S)-acetoin, and reduction of acetoin. Allows the use of 2,3-butanediol as an aerobic carbon source. This Saccharomyces cerevisiae (strain ATCC 204508 / S288c) (Baker's yeast) protein is (R,R)-butanediol dehydrogenase (BDH1).